The following is a 200-amino-acid chain: Probable GTP-binding protein EngB (200 aa).

The 175-residue stretch at 24 to 198 folds into the EngB-type G domain; it reads EGMEVAFAGR…QAQLDEWLGI (175 aa). GTP contacts are provided by residues 32-39, 59-63, 77-80, 144-147, and 177-179; these read GRSNVGKS, GRTQM, DLPG, TKSD, and FSA. Mg(2+) contacts are provided by Ser39 and Thr61.

It belongs to the TRAFAC class TrmE-Era-EngA-EngB-Septin-like GTPase superfamily. EngB GTPase family. Mg(2+) serves as cofactor.

Necessary for normal cell division and for the maintenance of normal septation. The chain is Probable GTP-binding protein EngB from Nitrosococcus oceani (strain ATCC 19707 / BCRC 17464 / JCM 30415 / NCIMB 11848 / C-107).